The primary structure comprises 212 residues: MEGEPASREEGEAVNASGAAAASAFRESAQQMSNERGFENVELGVIGKKKKVPRRVIHFVSGETMEEYSTDEDEVDSLEKKDVLPPVDPTKLTWGPYLWFHMLRAATSTLSVCDFLGEKIASVLGISTPKYQYAIDEYYRMKKEEEEEEEENRMSEEAERQYQQNKLQADSVVQSDQPETLASSSFVNLNFEMEGDCEVITESKQNPVSVPL.

The residue at position 1 (methionine 1) is an N-acetylmethionine. Positions 1-11 (MEGEPASREEG) are enriched in basic and acidic residues. The tract at residues 1-33 (MEGEPASREEGEAVNASGAAAASAFRESAQQMS) is disordered. Positions 13–29 (AVNASGAAAASAFRESA) are enriched in low complexity. Serine 69 is subject to Phosphoserine. Threonine 70 carries the post-translational modification Phosphothreonine. Positions 135–172 (IDEYYRMKKEEEEEEEENRMSEEAERQYQQNKLQADSV) form a coiled coil. The disordered stretch occupies residues 146 to 179 (EEEEEENRMSEEAERQYQQNKLQADSVVQSDQPE). A compositionally biased stretch (polar residues) spans 161–179 (QYQQNKLQADSVVQSDQPE).

It belongs to the FAM177 family.

The chain is Protein FAM177A1 (FAM177A1) from Bos taurus (Bovine).